We begin with the raw amino-acid sequence, 228 residues long: Upstream activation factor subunit UAF30 (228 aa).

The DEK-C domain maps to 1-56 (MAELNDYSTMIDILLSDMDLETVTTKKVRMALKEVYAIDVESQGKAINKLIRKHLD). Residues 89-111 (SKRSSGEEKNDSETKGTHVEKKK) show a composition bias toward basic and acidic residues. Residues 89–118 (SKRSSGEEKNDSETKGTHVEKKKGTVSKSP) form a disordered region. One can recognise an SWIB/MDM2 domain in the interval 119–195 (ISTRKVTLSK…HKILASHMTE (77 aa)). The interval 209–228 (VRRKEKPIVSDSEQSDTKGI) is disordered. Phosphoserine is present on residues serine 218, serine 220, and serine 223.

In terms of assembly, component of the UAF (upstream activation factor) complex which consists of UAF30, RRN5, RRN9, RRN10, and histones H3 and H4.

The protein resides in the nucleus. Its subcellular location is the nucleolus. Nonessential component of the UAF (upstream activation factor) complex which interacts with the upstream element of the RNA polymerase I promoter and forms a stable preinitiation complex. Together with SPT15/TBP UAF seems to stimulate basal transcription to a fully activated level. UAF30 seems to play a role in silencing transcription by RNA polymerase II. The polypeptide is Upstream activation factor subunit UAF30 (UAF30) (Saccharomyces cerevisiae (strain ATCC 204508 / S288c) (Baker's yeast)).